The sequence spans 698 residues: MSADYSSEKFKATHLFDEILWHFRSNLSLKTNRRGLATAENSFSGKEAVDFLMIEMPRIIPNNVPERDKMQKFLEFMMDMNVISEAFPKKVKQRRPFSESRIYLFMKTLDELKHPKPRSRRSASFSGARKSAKVAQPASPAATMHRPPKARLPRRLSRSNGNIDKAGIDNSSGGVENHGFDDHKDDEIPKKQRTPKILNRSLESICTEEYTEKREVSEMKEKVYDWLPFFKSRRNHTKVNQPTRRSASLDRNHCVLEQEKAEAALRSQKVTTPPIREAPKDVVFMHPQGPLPAVPSRYQNHRTSIAGSNPALLSRGRMYESIMRRSSVVPVADSVQANNECSFWKTELLGRLEQIYDRTLPCEWASKVDGYDIQWNMIEIDHADGIVKSRCQGLQPDYPQTVIQFMDYLVRYPFVTHKKMDTGLEYNVNRIFITLVNRLEDLNAPLQFDECSLIVNLLCKIDSFAAMLDNGPARRWSKVMISSSASSIEEAGLMVDGFSRDLPACGIRASKYRRRALSPFDNRVNLEIQDEKSYEIREQWLIEAIQLVLLSLPTSRRRKLHKFVTFIQSIETNAVFDLADPSNGSSNNREAAIIGLWTGVCSKCRKQQGMLITAVLLANFQSLFAVPVEFIEQVKRLECEEKDRYSGPRYAKITRSRNDWQPPVPDKPQASPAVFKKPLREVACEKTKKGLFTRLLRK.

The DEP domain maps to 23–107; sequence FRSNLSLKTN…SESRIYLFMK (85 aa). Disordered regions lie at residues 115–188 and 653–672; these read PKPR…DDEI and ITRS…QASP. Residues 146–157 are compositionally biased toward basic residues; it reads RPPKARLPRRLS. A compositionally biased stretch (basic and acidic residues) spans 178 to 188; sequence HGFDDHKDDEI.

The protein localises to the cytoplasm. Its subcellular location is the cell cortex. In terms of biological role, required for the proper orientation of spindles after the establishment of polarity. May play a role in interactions between the astral microtubules and the cortical cytoskeleton. Required for asymmetric forces on nuclei and spindles. Acts downstream of the PAR signaling as an intermediate that transduces polarity information to the machinery that positions the mitotic spindle, possibly by regulating force generation. Regulates gpr-1/2 asymmetric cortical localization during the first embryonic cell divisions. Acts antagonistically to the gpr-1/2 signaling pathway. Regulates mes-1 expression and/or localization pattern during early embryogenesis. In Caenorhabditis elegans, this protein is Protein let-99 (let-99).